The sequence spans 850 residues: Response regulator sskA (850 aa).

Disordered stretches follow at residues 1–225 (MPDR…GASS) and 419–542 (IPQR…GQSP). The segment covering 7–25 (SQLLKSKLLRRSSTTATTS) has biased composition (low complexity). Residues 117-138 (GANSRQEGSQNGSIQQSPTFTR) are compositionally biased toward polar residues. Residues 144–163 (QLTEEKDKGKLQSREGDQRG) are compositionally biased toward basic and acidic residues. Polar residues predominate over residues 177 to 196 (SDPQYSLTTELANKPSTPQT). Positions 436–445 (HHSEPGEHGE) are enriched in basic and acidic residues. Residues 477–490 (PSISILTTDSNMAS) are compositionally biased toward polar residues. The segment covering 492-511 (PQPPVAAPQVPTPPGPPPES) has biased composition (pro residues). Positions 558-719 (NVLIVEDNII…WLEQKVTEWG (162 aa)) constitute a Response regulatory domain. Asp-607 is subject to 4-aspartylphosphate. The tract at residues 736-850 (FADEPQSSSP…DEEQQALDAT (115 aa)) is disordered. Low complexity predominate over residues 762-782 (SSRTSTSPSSAAVNATARAFA). Polar residues predominate over residues 819–828 (TLDSPASPLT). Residues 839–850 (PGDEEQQALDAT) show a composition bias toward acidic residues.

This sequence belongs to the SSK1 family.

Its subcellular location is the cytoplasm. Final receptor of the osmolarity two-component system regulatory system, which controls activity of the sakA mitogen-activated protein kinase (MAPK) pathway in response to changes in the osmolarity of the extracellular environment. Regulates the germination in the airways that drives enhanced disease initiation and inflammation in the lungs. This chain is Response regulator sskA, found in Aspergillus fumigatus (strain ATCC MYA-4609 / CBS 101355 / FGSC A1100 / Af293) (Neosartorya fumigata).